A 1407-amino-acid polypeptide reads, in one-letter code: DNA-directed RNA polymerase subunit beta' (1407 aa).

4 residues coordinate Zn(2+): C70, C72, C85, and C88. Mg(2+) contacts are provided by D460, D462, and D464. Zn(2+) is bound by residues C814, C888, C895, and C898.

It belongs to the RNA polymerase beta' chain family. As to quaternary structure, the RNAP catalytic core consists of 2 alpha, 1 beta, 1 beta' and 1 omega subunit. When a sigma factor is associated with the core the holoenzyme is formed, which can initiate transcription. It depends on Mg(2+) as a cofactor. Zn(2+) is required as a cofactor.

The enzyme catalyses RNA(n) + a ribonucleoside 5'-triphosphate = RNA(n+1) + diphosphate. In terms of biological role, DNA-dependent RNA polymerase catalyzes the transcription of DNA into RNA using the four ribonucleoside triphosphates as substrates. In Salmonella arizonae (strain ATCC BAA-731 / CDC346-86 / RSK2980), this protein is DNA-directed RNA polymerase subunit beta'.